The sequence spans 593 residues: Epidermal growth factor receptor kinase substrate 8-like protein 3 (593 aa).

One can recognise a PTB domain in the interval 28-155 (QHRVEHLMTC…ALEEELEQRP (128 aa)). Disordered regions lie at residues 149 to 171 (EELE…RGPA), 184 to 239 (LEPG…ERDE), and 374 to 451 (ADWT…PAQP). Phosphoserine is present on Ser231. The span at 386–401 (PTFSDDWQLPEPSSQA) shows a compositional bias: polar residues. The span at 425 to 435 (PQEKTHNHDPQ) shows a compositional bias: basic and acidic residues. In terms of domain architecture, SH3 spans 450 to 509 (QPALKMQVLYEFEARNPRELTVVQGEKLEVLDHSKRWWLVKNEAGRSGYIPSNILEPLQP).

Belongs to the EPS8 family. Interacts with ABI1. Part of a complex that contains SOS1, ABI1 and EPS8L2. Interacts with FASLG.

The protein resides in the cytoplasm. The polypeptide is Epidermal growth factor receptor kinase substrate 8-like protein 3 (EPS8L3) (Homo sapiens (Human)).